The following is a 283-amino-acid chain: MILDGKAVSEKRLELLKEEIEESGLYPRLATVIVGEDPASQMYVRMKHRACERVGIGSIGIELPADASTEQVLEAVARLNNDPDINGILVQLPLPGGVDTTRVIDAVAPEKDVDGFHPCSLGRLFSGTPVFAPCTPQGIMTILDEYRIPIRGKRAVVVGRSIDVGRPMAALLLNADATVTICHSKTENLEDEMRRADILVSAIGKAKFVGPEMVKEGATVIDVGINQDEQGKLCGDVDFDAVKDRAGAITPVPGGVGPMTIATLMENTFRAAKLRTCGNNTVR.

NADP(+) is bound by residues Gly-159–Ser-161, Ser-184, and Ile-225.

It belongs to the tetrahydrofolate dehydrogenase/cyclohydrolase family. In terms of assembly, homodimer.

It catalyses the reaction (6R)-5,10-methylene-5,6,7,8-tetrahydrofolate + NADP(+) = (6R)-5,10-methenyltetrahydrofolate + NADPH. The catalysed reaction is (6R)-5,10-methenyltetrahydrofolate + H2O = (6R)-10-formyltetrahydrofolate + H(+). Its pathway is one-carbon metabolism; tetrahydrofolate interconversion. Its function is as follows. Catalyzes the oxidation of 5,10-methylenetetrahydrofolate to 5,10-methenyltetrahydrofolate and then the hydrolysis of 5,10-methenyltetrahydrofolate to 10-formyltetrahydrofolate. The chain is Bifunctional protein FolD from Methanoculleus marisnigri (strain ATCC 35101 / DSM 1498 / JR1).